Reading from the N-terminus, the 210-residue chain is dTTP/UTP pyrophosphatase (210 aa).

The Proton acceptor role is filled by Asp85.

This sequence belongs to the Maf family. YhdE subfamily. A divalent metal cation is required as a cofactor.

Its subcellular location is the cytoplasm. The enzyme catalyses dTTP + H2O = dTMP + diphosphate + H(+). It carries out the reaction UTP + H2O = UMP + diphosphate + H(+). Nucleoside triphosphate pyrophosphatase that hydrolyzes dTTP and UTP. May have a dual role in cell division arrest and in preventing the incorporation of modified nucleotides into cellular nucleic acids. The chain is dTTP/UTP pyrophosphatase from Saccharophagus degradans (strain 2-40 / ATCC 43961 / DSM 17024).